Consider the following 395-residue polypeptide: Na(+)/H(+) antiporter NhaA (395 aa).

11 helical membrane passes run 15 to 35, 66 to 86, 101 to 121, 132 to 152, 161 to 181, 184 to 204, 219 to 239, 265 to 285, 301 to 321, 339 to 359, and 366 to 386; these read FLGS…AGFV, IDAW…ILEI, VALP…TYLL, GWAI…LALG, AWLM…IAVF, NALY…LIGA, CILL…AGVI, ALTP…NVGV, LGIM…ATLL, VFGL…IANL, and LVIP…LAGW.

It belongs to the NhaA Na(+)/H(+) (TC 2.A.33) antiporter family.

Its subcellular location is the cell inner membrane. The enzyme catalyses Na(+)(in) + 2 H(+)(out) = Na(+)(out) + 2 H(+)(in). Na(+)/H(+) antiporter that extrudes sodium in exchange for external protons. The polypeptide is Na(+)/H(+) antiporter NhaA (Gluconacetobacter diazotrophicus (strain ATCC 49037 / DSM 5601 / CCUG 37298 / CIP 103539 / LMG 7603 / PAl5)).